The following is a 311-amino-acid chain: Aspartate carbamoyltransferase catalytic subunit (311 aa).

2 residues coordinate carbamoyl phosphate: Arg-58 and Thr-59. Residue Lys-86 coordinates L-aspartate. The carbamoyl phosphate site is built by Arg-108, His-136, and Gln-139. Residues Arg-169 and Arg-224 each coordinate L-aspartate. Residues Gly-265 and Pro-266 each coordinate carbamoyl phosphate.

Belongs to the aspartate/ornithine carbamoyltransferase superfamily. ATCase family. In terms of assembly, heterododecamer (2C3:3R2) of six catalytic PyrB chains organized as two trimers (C3), and six regulatory PyrI chains organized as three dimers (R2).

It carries out the reaction carbamoyl phosphate + L-aspartate = N-carbamoyl-L-aspartate + phosphate + H(+). It participates in pyrimidine metabolism; UMP biosynthesis via de novo pathway; (S)-dihydroorotate from bicarbonate: step 2/3. Its function is as follows. Catalyzes the condensation of carbamoyl phosphate and aspartate to form carbamoyl aspartate and inorganic phosphate, the committed step in the de novo pyrimidine nucleotide biosynthesis pathway. This is Aspartate carbamoyltransferase catalytic subunit from Geotalea uraniireducens (strain Rf4) (Geobacter uraniireducens).